Reading from the N-terminus, the 330-residue chain is Lysophospholipase D GDPD3 (330 aa).

A topological domain (cytoplasmic) is located at residue methionine 1. The helical transmembrane segment at 2-22 (IPLLYFVLPTLGSYVMLSIFF) threads the bilayer. At 23–200 (LRRPHLLHTP…ANPEMPMAFT (178 aa)) the chain is on the extracellular side. Residues 39-308 (IRLAAHRGGS…DYPTALRHYL (270 aa)) form the GP-PDE domain. Residues glutamate 71, aspartate 73, and histidine 86 each coordinate a divalent metal cation. A helical membrane pass occupies residues 201–221 (IWRSFWILLLYYLGLLPFVSI). The Cytoplasmic segment spans residues 222–330 (PEKFFFCFLP…EALSCLSLKK (109 aa)). The segment at 311 to 330 (QEEETQPPQPEALSCLSLKK) is disordered.

Belongs to the glycerophosphoryl diester phosphodiesterase family. As to expression, highly expressed in stomach and kidney. In stomach detected in the glandular epithelium. Predominantly expressed in the stomach (at protein level).

The protein resides in the membrane. It is found in the cytoplasm. Its subcellular location is the perinuclear region. It localises to the endoplasmic reticulum membrane. The enzyme catalyses 1-hexadecanoyl-sn-glycero-3-phosphocholine + H2O = 1-hexadecanoyl-sn-glycero-3-phosphate + choline + H(+). It catalyses the reaction 1-O-hexadecyl-sn-glycero-3-phosphocholine + H2O = 1-O-hexadecyl-sn-glycero-3-phosphate + choline + H(+). The catalysed reaction is 1-O-(1Z-octadecenyl)-sn-glycero-3-phospho-N-hexadecanoyl-ethanolamine + H2O = 1-O-(1Z-octadecenyl)-sn-glycero-3-phosphate + N-hexadecanoylethanolamine + H(+). It carries out the reaction N-(5Z,8Z,11Z,14Z-eicosatetraenoyl)-1-(9Z-octadecenoyl)-sn-glycero-3-phosphoethanolamine + H2O = N-(5Z,8Z,11Z,14Z-eicosatetraenoyl)-ethanolamine + 1-(9Z-octadecenoyl)-sn-glycero-3-phosphate + H(+). The enzyme catalyses N,1-di-(9Z-octadecenoyl)-sn-glycero-3-phosphoethanolamine + H2O = N-(9Z-octadecenoyl) ethanolamine + 1-(9Z-octadecenoyl)-sn-glycero-3-phosphate + H(+). It catalyses the reaction N-hexadecanoyl-1-(9Z-octadecenoyl)-sn-glycero-3-phosphoethanolamine + H2O = N-hexadecanoylethanolamine + 1-(9Z-octadecenoyl)-sn-glycero-3-phosphate + H(+). The catalysed reaction is 1-hexadecanoyl-sn-glycero-3-phosphocholine + H2O = sn-glycerol 3-phosphocholine + hexadecanoate + H(+). With respect to regulation, lysophospholipase D activity is stimulated by calcium. Loss of lysophospholipase D activity in presence of EDTA. Functionally, hydrolyzes lysoglycerophospholipids to produce lysophosphatidic acid (LPA) and the corresponding amines. Shows a preference for 1-O-alkyl-sn-glycero-3-phosphocholine (lyso-PAF), lysophosphatidylcholine (lyso-PC) and N-acylethanolamine lysophospholipids. Does not display glycerophosphodiester phosphodiesterase activity, since it cannot hydrolyze either glycerophosphoinositol or glycerophosphocholine. This chain is Lysophospholipase D GDPD3, found in Mus musculus (Mouse).